The sequence spans 138 residues: ATP synthase epsilon chain (138 aa).

Belongs to the ATPase epsilon chain family. As to quaternary structure, F-type ATPases have 2 components, CF(1) - the catalytic core - and CF(0) - the membrane proton channel. CF(1) has five subunits: alpha(3), beta(3), gamma(1), delta(1), epsilon(1). CF(0) has three main subunits: a, b and c.

It localises to the cell membrane. In terms of biological role, produces ATP from ADP in the presence of a proton gradient across the membrane. The protein is ATP synthase epsilon chain of Streptococcus gordonii (strain Challis / ATCC 35105 / BCRC 15272 / CH1 / DL1 / V288).